We begin with the raw amino-acid sequence, 93 residues long: MFKVNEYFDGTVKSIAFSQAEGQATIGVMAAGEYEFGTAQREIMHVISGELNVKLPDSTDWETFSTGSQFNVPANSKFQLKVSVDTAYLCEYR.

This sequence belongs to the nucleoside phosphorylase PpnP family.

The catalysed reaction is a purine D-ribonucleoside + phosphate = a purine nucleobase + alpha-D-ribose 1-phosphate. The enzyme catalyses adenosine + phosphate = alpha-D-ribose 1-phosphate + adenine. It catalyses the reaction cytidine + phosphate = cytosine + alpha-D-ribose 1-phosphate. It carries out the reaction guanosine + phosphate = alpha-D-ribose 1-phosphate + guanine. The catalysed reaction is inosine + phosphate = alpha-D-ribose 1-phosphate + hypoxanthine. The enzyme catalyses thymidine + phosphate = 2-deoxy-alpha-D-ribose 1-phosphate + thymine. It catalyses the reaction uridine + phosphate = alpha-D-ribose 1-phosphate + uracil. It carries out the reaction xanthosine + phosphate = alpha-D-ribose 1-phosphate + xanthine. Catalyzes the phosphorolysis of diverse nucleosides, yielding D-ribose 1-phosphate and the respective free bases. Can use uridine, adenosine, guanosine, cytidine, thymidine, inosine and xanthosine as substrates. Also catalyzes the reverse reactions. The chain is Pyrimidine/purine nucleoside phosphorylase from Pseudomonas syringae pv. tomato (strain ATCC BAA-871 / DC3000).